Reading from the N-terminus, the 3431-residue chain is KICSTOR complex protein SZT2 (3431 aa).

3 disordered regions span residues 699-731 (SKEP…PQQA), 1067-1101 (LRDP…TLPS), and 1162-1231 (KPKL…GADG). A mediates interaction with the GATOR1 complex region spans residues 1082–1188 (VAKDRAGNST…ATGTKATESQ (107 aa)). 2 stretches are compositionally biased toward polar residues: residues 1088–1101 (GNST…TLPS) and 1182–1212 (TKAT…TPSC). Ser1275 is subject to Phosphoserine. The interval 1356–1378 (PPSPGPLSPGPFSSSIEEGPEPR) is disordered. At Ser1415 the chain carries Phosphoserine. 7 disordered regions span residues 1512–1534 (YRES…SDAD), 1629–1678 (PPAS…HPGL), 1806–1883 (RAED…PGET), 2113–2148 (PPSL…SDAV), 2450–2512 (TEAG…LEEG), 2735–2756 (ASPP…GGPL), and 2866–2899 (ETCA…DVPP). Thr1640 bears the Phosphothreonine mark. The span at 1641 to 1657 (SESSASFPRSPGQPSSL) shows a compositional bias: polar residues. Phosphoserine is present on Ser1650. Positions 1832–1854 (PLISLPSLSQGGSQPGPSRGLSL) are enriched in low complexity. Over residues 2118-2129 (LSRSQEPISSED) the composition is skewed to polar residues. The span at 2460–2473 (TTDDIVLDRPEDTR) shows a compositional bias: basic and acidic residues. Low complexity predominate over residues 2739 to 2749 (LSREQGRLSGS).

Part of the KICSTOR complex composed of KPTN, ITFG2, KICS2 and SZT2. SZT2 probably serves as a link between the other three proteins in the KICSTOR complex and may mediate the direct interaction with the GATOR complex via GATOR1. The KICSTOR complex interacts directly with the GATOR1 complex and most probably indirectly with the GATOR2 complex in an amino acid-independent manner. In terms of tissue distribution, mostly expressed in brain, spinal cord and lung.

The protein localises to the lysosome membrane. It is found in the peroxisome. Its function is as follows. As part of the KICSTOR complex functions in the amino acid-sensing branch of the TORC1 signaling pathway. Recruits, in an amino acid-independent manner, the GATOR1 complex to the lysosomal membranes and allows its interaction with GATOR2 and the RAG GTPases. Functions upstream of the RAG GTPases and is required to negatively regulate mTORC1 signaling in absence of amino acids. In absence of the KICSTOR complex mTORC1 is constitutively localized to the lysosome and activated. The KICSTOR complex is also probably involved in the regulation of mTORC1 by glucose. May play a role in the cellular response to oxidative stress. The chain is KICSTOR complex protein SZT2 from Mus musculus (Mouse).